We begin with the raw amino-acid sequence, 345 residues long: MDLLKELESLVPELERGLDQASSLTELEELRVAFLGRKGRLAQIMGRLPELSPEDRPRLGQAANGVKMALTERFEGRKTALEAASEAAALSRFDPTLPGRAPWRGSLHPDTLVMEEICSVFRGLGYDIVTGPEVEMDHYNFEALNMPAEHPARDMQDTLYVTESILMRTHTSPLQVRTMLARKPPVAIIAPGKVYRRDSDITHTPMFHQIEGLMVDKGVSMADLRGTLTSFLRNVFGGDTRVRFRPSFFPFTEPSAEVDISCCICGGKGHVGNEPCRVCKTTGWVEILGCGMVDPAVFTAVGYDPEEYTGFAFGLGVERVAMLKYGIGDLRMFFENDVRFLSQFS.

E253 serves as a coordination point for Mg(2+).

This sequence belongs to the class-II aminoacyl-tRNA synthetase family. Phe-tRNA synthetase alpha subunit type 1 subfamily. In terms of assembly, tetramer of two alpha and two beta subunits. Mg(2+) serves as cofactor.

It localises to the cytoplasm. The enzyme catalyses tRNA(Phe) + L-phenylalanine + ATP = L-phenylalanyl-tRNA(Phe) + AMP + diphosphate + H(+). The chain is Phenylalanine--tRNA ligase alpha subunit from Nitratidesulfovibrio vulgaris (strain DSM 19637 / Miyazaki F) (Desulfovibrio vulgaris).